A 364-amino-acid polypeptide reads, in one-letter code: MSKKMNSTPKKDGFWMPGEWEKHDQCWMIWPERSDNWRLGAKPAQRVFANVANAIAKYEKVTMLVSHQQFENARNLLDQNVRVIECSNDDSWMRDVGPTIVKNKDGEIRGVDWVFNAWGGFKGGLYFPWDKDDAIARKVCEISNIDYYRTDFVLEGGSIHTDGDGTLYTTEECLLNENRNPDLSKEQIEENLKEYCGVEKVIWLPLGVYNDETNGHVDNLLHVVSPGHVVLTWTDDTTDPQYERSKLAYDILTNTLDAKGRKIKVTKLHQPGPLFITKEEAEGIDVCDTMSREPEQRMPASYANFYIANNAIILPIFGDKYDDLAVKTLQSVYPNHKIETVMAREILLGGGNIHCITQQQPTTK.

Catalysis depends on Cys355, which acts as the Amidino-cysteine intermediate.

This sequence belongs to the agmatine deiminase family.

It catalyses the reaction agmatine + H2O = N-carbamoylputrescine + NH4(+). This chain is Putative agmatine deiminase, found in Mycoplasma capricolum subsp. capricolum (strain California kid / ATCC 27343 / NCTC 10154).